Here is a 487-residue protein sequence, read N- to C-terminus: N-succinylglutamate 5-semialdehyde dehydrogenase (487 aa).

Position 221-226 (221-226 (GSSDTG)) interacts with NAD(+). Active-site residues include glutamate 244 and cysteine 278.

Belongs to the aldehyde dehydrogenase family. AstD subfamily.

It carries out the reaction N-succinyl-L-glutamate 5-semialdehyde + NAD(+) + H2O = N-succinyl-L-glutamate + NADH + 2 H(+). It functions in the pathway amino-acid degradation; L-arginine degradation via AST pathway; L-glutamate and succinate from L-arginine: step 4/5. Its function is as follows. Catalyzes the NAD-dependent reduction of succinylglutamate semialdehyde into succinylglutamate. This Burkholderia cenocepacia (strain ATCC BAA-245 / DSM 16553 / LMG 16656 / NCTC 13227 / J2315 / CF5610) (Burkholderia cepacia (strain J2315)) protein is N-succinylglutamate 5-semialdehyde dehydrogenase.